A 246-amino-acid chain; its full sequence is UDP-N-acetyl-D-mannosaminuronic acid transferase (246 aa).

It belongs to the glycosyltransferase 26 family.

The catalysed reaction is UDP-N-acetyl-alpha-D-mannosaminouronate + N-acetyl-alpha-D-glucosaminyl-di-trans,octa-cis-undecaprenyl diphosphate = beta-D-ManNAcA-(1-&gt;4)-alpha-D-GlcNAc-di-trans,octa-cis-undecaprenyl diphosphate + UDP + H(+). The protein operates within bacterial outer membrane biogenesis; enterobacterial common antigen biosynthesis. Catalyzes the synthesis of Und-PP-GlcNAc-ManNAcA (Lipid II), the second lipid-linked intermediate involved in enterobacterial common antigen (ECA) synthesis. The polypeptide is UDP-N-acetyl-D-mannosaminuronic acid transferase (Escherichia coli O127:H6 (strain E2348/69 / EPEC)).